Reading from the N-terminus, the 215-residue chain is Ion-translocating oxidoreductase complex subunit G (215 aa).

The chain crosses the membrane as a helical span at residues 9-29 (GLILSLFAIITSGLIALTYFG). The residue at position 176 (threonine 176) is an FMN phosphoryl threonine.

The protein belongs to the RnfG family. The complex is composed of six subunits: RnfA, RnfB, RnfC, RnfD, RnfE and RnfG. Requires FMN as cofactor.

The protein localises to the cell inner membrane. Its function is as follows. Part of a membrane-bound complex that couples electron transfer with translocation of ions across the membrane. This is Ion-translocating oxidoreductase complex subunit G from Pseudoalteromonas atlantica (strain T6c / ATCC BAA-1087).